We begin with the raw amino-acid sequence, 418 residues long: Sprouty-related, EVH1 domain-containing protein 2 (418 aa).

A WH1 domain is found at 5–122; sequence THPDDDSYIV…RGVRKAIEDL (118 aa). Residues 127 to 171 are disordered; that stretch reads TTSSSTIHNEAELGDDDVFTTATDSSSNSSQKREQPTRTISSPTS. A compositionally biased stretch (polar residues) spans 146–156; that stretch reads TTATDSSSNSS. Positions 201 to 257 constitute a KBD domain; the sequence is PYRQVSFPDDDEEIVRINPREKIWMTGYEDYRHAPVRGKYPDPSEDADSSYVRFAKG. Phosphoserine is present on Ser-206. Tyr-228 and Tyr-231 each carry phosphotyrosine. Positions 275–302 are disordered; the sequence is GLGEDPKGRGGSVIKTQPSRGKSRRRKE. In terms of domain architecture, SPR spans 308 to 416; the sequence is RCVYCRDMFN…CRCCGGKHKA (109 aa).

In terms of assembly, homodimer and heterodimer. Able to interact with SPRED1 to form heterodimers. Interacts with RAS. May interact with ZDHHC13 (via ANK repeats) and ZDHHC17 (via ANK repeats). Interacts with TESK1. Interacts with NF1. In terms of processing, phosphorylated on serine and threonine residues. Phosphorylated on tyrosine. Phosphorylation of Tyr-228 and Tyr-231 are required for ubiquitination. Post-translationally, ubiquitinated; leading to degradation by the proteasome. In terms of tissue distribution, expressed in liver, skin, small intestine, salivary gland and prostate.

The protein localises to the cell membrane. Its subcellular location is the cytoplasmic vesicle. It is found in the secretory vesicle membrane. The protein resides in the cytoplasm. Its function is as follows. Negatively regulates Ras signaling pathways and downstream activation of MAP kinases. Recruits and translocates NF1 to the cell membrane, thereby enabling NF1-dependent hydrolysis of active GTP-bound Ras to inactive GDP-bound Ras. Inhibits fibroblast growth factor (FGF)-induced retinal lens fiber differentiation, probably by inhibiting FGF-mediated phosphorylation of ERK1/2. Inhibits TGFB-induced epithelial-to-mesenchymal transition in lens epithelial cells. The polypeptide is Sprouty-related, EVH1 domain-containing protein 2 (SPRED2) (Homo sapiens (Human)).